A 61-amino-acid polypeptide reads, in one-letter code: Weak toxin CM-2 (61 aa).

4 disulfides stabilise this stretch: Cys3–Cys21, Cys14–Cys37, Cys41–Cys53, and Cys54–Cys59.

The protein belongs to the three-finger toxin family. Short-chain subfamily. Orphan group VI sub-subfamily. As to expression, expressed by the venom gland.

Its subcellular location is the secreted. The polypeptide is Weak toxin CM-2 (Naja haje haje (Egyptian cobra)).